A 534-amino-acid polypeptide reads, in one-letter code: Pentatricopeptide repeat-containing protein At1g07590, mitochondrial (534 aa).

Residues 1 to 20 (MRSIIALMRQREYFVQAIRR) constitute a mitochondrion transit peptide. PPR repeat units follow at residues 165 to 199 (NELLYNNLVIACLDQGVIRLALEYMKKMRELGYRT), 200 to 234 (SHLVYNRLIIRNSAPGRRKLIAKDLALMKADKATP), 235 to 269 (HVSTYHILMKLEANEHNIDGVLKAFDGMKKAGVEP), 270 to 300 (NEVSYCILAMAHAVARLYTVAEAYTEEIEKS), 305 to 335 (NWSTLDILMILYGRLGKEKELARTWNVIRGF), 339 to 369 (RSKSYLLATEAFARVGNLDRAEELWLEMKNV), 374 to 408 (ETEQFNSLLSVYCKDGLIEKAIGVFREMTGNGFKP), 409 to 443 (NSITYRHLALGCAKAKLMKEALKNIEMGLNLKTSK), and 451 to 485 (WLETTLSIIECFAEKGDVENSEKLFEEVKNAKYNR).

The protein belongs to the PPR family. P subfamily.

The protein resides in the mitochondrion. This Arabidopsis thaliana (Mouse-ear cress) protein is Pentatricopeptide repeat-containing protein At1g07590, mitochondrial.